The primary structure comprises 239 residues: Serine protease SplD (239 aa).

Residues 1–36 (MNKNIIIKSIAALTILTSITGVGTTVVDGIQQTAKA) form the signal peptide. Active-site charge relay system residues include His-75, Asp-114, and Ser-192.

This sequence belongs to the peptidase S1B family.

It localises to the secreted. The protein is Serine protease SplD (splD) of Staphylococcus aureus (strain COL).